Reading from the N-terminus, the 378-residue chain is 4-hydroxy-3-methylbut-2-en-1-yl diphosphate synthase (flavodoxin) (378 aa).

Positions 268, 271, 303, and 310 each coordinate [4Fe-4S] cluster.

Belongs to the IspG family. The cofactor is [4Fe-4S] cluster.

The catalysed reaction is (2E)-4-hydroxy-3-methylbut-2-enyl diphosphate + oxidized [flavodoxin] + H2O + 2 H(+) = 2-C-methyl-D-erythritol 2,4-cyclic diphosphate + reduced [flavodoxin]. The protein operates within isoprenoid biosynthesis; isopentenyl diphosphate biosynthesis via DXP pathway; isopentenyl diphosphate from 1-deoxy-D-xylulose 5-phosphate: step 5/6. Its function is as follows. Converts 2C-methyl-D-erythritol 2,4-cyclodiphosphate (ME-2,4cPP) into 1-hydroxy-2-methyl-2-(E)-butenyl 4-diphosphate. The sequence is that of 4-hydroxy-3-methylbut-2-en-1-yl diphosphate synthase (flavodoxin) from Corynebacterium glutamicum (strain ATCC 13032 / DSM 20300 / JCM 1318 / BCRC 11384 / CCUG 27702 / LMG 3730 / NBRC 12168 / NCIMB 10025 / NRRL B-2784 / 534).